A 73-amino-acid chain; its full sequence is RNA-binding protein Hfq (73 aa).

A Sm domain is found at 8–68 (DQFLNQIRKE…ISTFAPQKNV (61 aa)).

The protein belongs to the Hfq family. As to quaternary structure, homohexamer.

Its function is as follows. RNA chaperone that binds small regulatory RNA (sRNAs) and mRNAs to facilitate mRNA translational regulation in response to envelope stress, environmental stress and changes in metabolite concentrations. Also binds with high specificity to tRNAs. The chain is RNA-binding protein Hfq from Bacillus licheniformis (strain ATCC 14580 / DSM 13 / JCM 2505 / CCUG 7422 / NBRC 12200 / NCIMB 9375 / NCTC 10341 / NRRL NRS-1264 / Gibson 46).